Here is a 46-residue protein sequence, read N- to C-terminus: Peroxidase 1 (46 aa).

Belongs to the peroxidase family. Classical plant (class III) peroxidase subfamily. The cofactor is heme b. Ca(2+) is required as a cofactor.

It localises to the secreted. The enzyme catalyses 2 a phenolic donor + H2O2 = 2 a phenolic radical donor + 2 H2O. Its function is as follows. Removal of H(2)O(2), oxidation of toxic reductants, biosynthesis and degradation of lignin, suberization, auxin catabolism, response to environmental stresses such as wounding, pathogen attack and oxidative stress. These functions might be dependent on each isozyme/isoform in each plant tissue. This chain is Peroxidase 1, found in Catharanthus roseus (Madagascar periwinkle).